Reading from the N-terminus, the 308-residue chain is Phenylcoumaran benzylic ether reductase PT1 (308 aa).

Residues 11 to 17 (GATGYIG), arginine 36, and lysine 46 contribute to the NADP(+) site. Lysine 134 acts as the Proton acceptor in catalysis. Arginine 138 serves as a coordination point for NADP(+).

Belongs to the NmrA-type oxidoreductase family. Isoflavone reductase subfamily.

It catalyses the reaction (-)-dehydrodiconiferyl alcohol + NADPH + H(+) = (S)-isodihydrodehydrodiconiferyl alcohol + NADP(+). It carries out the reaction (+)-dehydrodiconiferyl alcohol + NADPH + H(+) = (R)-isodihydrodehydrodiconiferyl alcohol + NADP(+). The catalysed reaction is (2R,3S)-dihydrodehydrodiconiferyl alcohol + NADPH + H(+) = (S)-tetrahydrodehydrodiconiferyl alcohol + NADP(+). The enzyme catalyses (2S,3R)-dihydrodehydrodiconiferyl alcohol + NADPH + H(+) = (R)-tetrahydrodehydrodiconiferyl alcohol + NADP(+). Functionally, oxidoreductase involved in lignan biosynthesis. Catalyzes the NADPH-dependent reduction of phenylcoumaran benzylic ethers. Converts dehydrodiconiferyl alcohol (DDC) to isodihydrodehydrodiconiferyl alcohol (IDDDC), and dihydrodehydrodiconiferyl alcohol (DDDC) to tetrahydrodehydrodiconiferyl alcohol (TDDC). The chain is Phenylcoumaran benzylic ether reductase PT1 from Pinus taeda (Loblolly pine).